A 207-amino-acid chain; its full sequence is TM2 domain-containing protein 1 (207 aa).

Positions 1 to 37 (MAAAWPSGPSAPEAVTARLVGVLWFVSVTTGPWGAVA) are cleaved as a signal peptide. The Extracellular segment spans residues 40-128 (AGGEESLKCE…YSYKVAVALS (89 aa)). N-linked (GlcNAc...) asparagine glycans are attached at residues N72, N75, N87, and N96. In terms of domain architecture, TM2 spans 118–166 (GYSYKVAVALSLFLGWLGADRFYLGYPALGLLKFCTVGFCGIGSLIDFI). A helical membrane pass occupies residues 129-149 (LFLGWLGADRFYLGYPALGLL). The Cytoplasmic portion of the chain corresponds to 150–153 (KFCT). A helical membrane pass occupies residues 154–174 (VGFCGIGSLIDFILISMQIVG). Residues 175–207 (PSDGSSYIIDYYGTRLTRLSITNETFRKTQLYP) lie on the Extracellular side of the membrane. The N-linked (GlcNAc...) asparagine glycan is linked to N197.

It belongs to the TM2 family. Interacts with APP beta-APP42 (amyloid-beta protein 42). Post-translationally, N-glycosylated. As to expression, widely expressed.

The protein resides in the membrane. May participate in amyloid-beta-induced apoptosis via its interaction with beta-APP42. The sequence is that of TM2 domain-containing protein 1 (TM2D1) from Homo sapiens (Human).